Reading from the N-terminus, the 531-residue chain is Nuclear RNA export factor 3 (531 aa).

Disordered stretches follow at residues 33 to 59 and 83 to 106; these read RSEP…HGAH and QDQT…GNMP. Positions 41–50 are enriched in polar residues; sequence MHSSSHQQQD. The segment covering 83 to 102 has biased composition (basic and acidic residues); the sequence is QDQTHVNMEREQKPPERRME. The RRM domain occupies 113–192; sequence WFKITVPFGI…IFVNPAGIPH (80 aa). An NTF2 domain is found at 344–494; sequence LVLQFLQQYY…LCIVNDKLFV (151 aa).

This sequence belongs to the NXF family. Interacts with NXT1, NXT2, E1B-AP5 and CRM1 nuclear export factor. Expressed at high level in testis and at low level in a small number of tissues.

It is found in the nucleus. Its subcellular location is the cytoplasm. Functionally, may function as a tissue-specific nuclear mRNA export factor. The protein is Nuclear RNA export factor 3 (NXF3) of Homo sapiens (Human).